The sequence spans 268 residues: Eukaryotic translation initiation factor 3 subunit J (268 aa).

Disordered regions lie at residues 1 to 27 (MSWDDEEFEVRTSTKDQPMVVSWDDEF), 40 to 63 (DAEEVPKQKQKPKAAPKAAKKVDK), and 217 to 249 (LAKVKGGTATGGAGKKKAKAARPNLGGAFKKDQ). Residues 47–58 (QKQKPKAAPKAA) show a composition bias toward basic residues. A coiled-coil region spans residues 191 to 221 (IESIRQTVATLNVLIKEKERQERQARLAKVK).

It belongs to the eIF-3 subunit J family. Component of the eukaryotic translation initiation factor 3 (eIF-3) complex.

It localises to the cytoplasm. Its function is as follows. Component of the eukaryotic translation initiation factor 3 (eIF-3) complex, which is involved in protein synthesis of a specialized repertoire of mRNAs and, together with other initiation factors, stimulates binding of mRNA and methionyl-tRNAi to the 40S ribosome. The eIF-3 complex specifically targets and initiates translation of a subset of mRNAs involved in cell proliferation. This is Eukaryotic translation initiation factor 3 subunit J from Eremothecium gossypii (strain ATCC 10895 / CBS 109.51 / FGSC 9923 / NRRL Y-1056) (Yeast).